Reading from the N-terminus, the 178-residue chain is Fatty-acid and retinol-binding protein 1 (178 aa).

An N-terminal signal peptide occupies residues 1 to 16 (MYHQLILMALIGVIMA). N-linked (GlcNAc...) asparagine glycans are attached at residues asparagine 44 and asparagine 75. Coiled coils occupy residues 67–89 (DAALEALKNKSDKLYQKAVELRN) and 123–154 (KLDMEKIKQAARDIIAKYEALNEETKEELKAT). Residue asparagine 157 is glycosylated (N-linked (GlcNAc...) asparagine).

It belongs to the fatty-acid and retinol-binding protein (FARBP) family. In terms of processing, N-glycosylated.

The protein localises to the secreted. Functionally, binds retinol and different fatty acids. In Onchocerca gutturosa, this protein is Fatty-acid and retinol-binding protein 1.